The primary structure comprises 421 residues: Odorant receptor 67b (421 aa).

Topologically, residues 1–48 (MQDQLDHELERIDKLPKLGLLWVEYSAYALGVNIAPRKRSSKYCRLTR) are cytoplasmic. A helical transmembrane segment spans residues 49–69 (ILVLIVNLSIIYSLVAFIMEN). The Extracellular segment spans residues 70-71 (YM). Residues 72–92 (ISFETYVEAVLLTFQLSVGVV) form a helical membrane-spanning segment. Residues 93-151 (KMFHFQNKVESCSQLVFSTETGEVLKSLGLFQLDLPRKKELLSSVSLILLNNWMIIDRQ) lie on the Cytoplasmic side of the membrane. The chain crosses the membrane as a helical span at residues 152-172 (VMFFFKIVCMPVLYYCVRPYF). At 173–217 (QYIFDCYIKDKDTCEMTLTYPAIVPYLQLGNYEFPSYVIRFFLLQ) the chain is on the extracellular side. The chain crosses the membrane as a helical span at residues 218 to 238 (SGPLWCFFAVFGFNSLFVVLT). At 239 to 289 (RYESGLIKVLRFLVQNSTSDILVPKDQRVKYLQCCVRLFARISSHHNQIEN) the chain is on the cytoplasmic side. The chain crosses the membrane as a helical span at residues 290–310 (LFKYIILVQCSVSSILICMLL). The Extracellular portion of the chain corresponds to 311 to 315 (YKIST). The chain crosses the membrane as a helical span at residues 316 to 336 (VLEVGWVWMGMIMVYFVTIAL). Over 337 to 384 (EITLYNVSAQKVESQSELLFHDWYNCSWYNESREFKFMIKMMLLFSRR) the chain is Cytoplasmic. A helical membrane pass occupies residues 385-405 (TFVLSVGGFTSLSHKFLVQVF). Residues 406-421 (RLSANFFLLLRNMNNK) are Extracellular-facing.

The protein belongs to the insect chemoreceptor superfamily. Heteromeric odorant receptor channel (TC 1.A.69) family. Or63a subfamily. As to quaternary structure, interacts with Orco. Complexes exist early in the endomembrane system in olfactory sensory neurons (OSNs), coupling these complexes to the conserved ciliary trafficking pathway.

The protein resides in the cell membrane. Its function is as follows. Odorant receptor which mediates acceptance or avoidance behavior, depending on its substrates. The odorant receptor repertoire encodes a large collection of odor stimuli that vary widely in identity, intensity, and duration. May form a complex with Orco to form odorant-sensing units, providing sensitive and prolonged odorant signaling and calcium permeability. Involved in the behavioral responses to ethyl acetate, pentyl acetate, methyl caproate, anisole, heptanal, 2-heptanone, r-carvone, nonanoic acid, and pyrazines. The protein is Odorant receptor 67b (Or67b) of Drosophila melanogaster (Fruit fly).